A 61-amino-acid chain; its full sequence is Protein translocase subunit SecE (61 aa).

Residues 1–34 are Cytoplasmic-facing; it reads MAELQERIRHFWKESRRAFLVTKKPNWATYKRAA. A helical transmembrane segment spans residues 35–55; it reads KITGLGIILIGLIGMLIRIVG. Topologically, residues 56-61 are extracellular; that stretch reads ILILGG.

This sequence belongs to the SecE/SEC61-gamma family. In terms of assembly, component of the Sec protein translocase complex. Heterotrimer consisting of alpha (SecY), beta (SecG) and gamma (SecE) subunits. The heterotrimers can form oligomers, although 1 heterotrimer is thought to be able to translocate proteins. Interacts with the ribosome. May interact with SecDF, and other proteins may be involved.

The protein resides in the cell membrane. Functionally, essential subunit of the protein translocation channel SecYEG. Clamps together the 2 halves of SecY. May contact the channel plug during translocation. The protein is Protein translocase subunit SecE of Pyrococcus furiosus (strain ATCC 43587 / DSM 3638 / JCM 8422 / Vc1).